Consider the following 176-residue polypeptide: Transcription factor E (176 aa).

An HTH TFE/IIEalpha-type domain is found at asparagine 8–proline 90.

It belongs to the TFE family. Monomer. Interaction with RNA polymerase subunits RpoF and RpoE is necessary for Tfe stimulatory transcription activity. Able to interact with Tbp and RNA polymerase in the absence of DNA promoter. Interacts both with the preinitiation and elongation complexes.

Its function is as follows. Transcription factor that plays a role in the activation of archaeal genes transcribed by RNA polymerase. Facilitates transcription initiation by enhancing TATA-box recognition by TATA-box-binding protein (Tbp), and transcription factor B (Tfb) and RNA polymerase recruitment. Not absolutely required for transcription in vitro, but particularly important in cases where Tbp or Tfb function is not optimal. It dynamically alters the nucleic acid-binding properties of RNA polymerases by stabilizing the initiation complex and destabilizing elongation complexes. Seems to translocate with the RNA polymerase following initiation and acts by binding to the non template strand of the transcription bubble in elongation complexes. In Haloquadratum walsbyi (strain DSM 16790 / HBSQ001), this protein is Transcription factor E.